The chain runs to 134 residues: MTEEPIKEILGAPKAHMAATMEKSPKSEVVITTVPLVSEIQLMAATGGTELSCYRCIIPFAVVVFIAGIVVTAVAYSFNSHGSIISIFGLVVLSSGLFLLASSALCWKVRQRSKKAKRRESQTALVANQRSLFA.

The next 2 membrane-spanning stretches (helical) occupy residues 56–76 (CIIP…AVAY) and 84–104 (IISI…ASSA). S121 carries the phosphoserine modification.

As to quaternary structure, interacts (via C-terminus) with TRPA1 and TRPV1. Interacts with TASOR. Expressed in neurons of the myenteric and submucosal plexuses in the gastric body, jejunum and proximal colon. Expressed in arterial endothelial cells and neurons of the central nervous system and peripheral nervous system. Expressed in umbilical artery endothelial cells (at protein level).

It localises to the cell membrane. The protein resides in the membrane. The protein localises to the perikaryon. It is found in the cytoplasm. Its subcellular location is the perinuclear region. It localises to the endoplasmic reticulum. Its function is as follows. Plays a role during embryonic arterial endothelium differentiation and vascular morphogenesis through the ACVRL1 receptor-dependent signaling pathway upon stimulation by bone morphogenetic proteins, such as GDF2/BMP9 and BMP10. Involved in the regulation of nociception, acting as a modulator of the interaction between TRPA1 and TRPV1, two molecular sensors and mediators of pain signals in dorsal root ganglia (DRG) neurons. Mechanistically, it weakens their interaction, thereby releasing the inhibition of TRPA1 by TRPV1 and increasing the single-channel open probability of the TRPA1-TRPV1 complex. In Homo sapiens (Human), this protein is Transmembrane protein 100 (TMEM100).